Here is a 141-residue protein sequence, read N- to C-terminus: Putative antiporter subunit mnhB2 (141 aa).

4 consecutive transmembrane segments (helical) span residues 10 to 30 (TVTKLVVFILLTFGFYVFFAG), 35 to 55 (GGGFIGGLIFSSAFILMFLAF), 70 to 90 (ILMIIGALVSSITAIMPTFFG), and 114 to 134 (ITLFELGILFSVVGVIVTVML).

Belongs to the CPA3 antiporters (TC 2.A.63) subunit B family. In terms of assembly, may form a heterooligomeric complex that consists of seven subunits: mnhA2, mnhB2, mnhC2, mnhD2, mnhE2, mnhF2 and mnhG2.

Its subcellular location is the cell membrane. The chain is Putative antiporter subunit mnhB2 (mnhB2) from Staphylococcus aureus (strain MRSA252).